Here is a 494-residue protein sequence, read N- to C-terminus: Ketol-acid reductoisomerase (NADP(+)) (494 aa).

A KARI N-terminal Rossmann domain is found at 14–208 (LDQLGRCRFM…GGHRAGVLES (195 aa)). Residues 45–48 (CGAQ), R68, R76, S78, and 108–110 (DKQ) contribute to the NADP(+) site. Residue H132 is part of the active site. An NADP(+)-binding site is contributed by G158. KARI C-terminal knotted domains lie at 209–344 (SFVA…NYPV) and 345–487 (TDVE…MTDM). Residues D217, E221, E389, and E393 each contribute to the Mg(2+) site. S414 contacts substrate.

The protein belongs to the ketol-acid reductoisomerase family. Requires Mg(2+) as cofactor.

The catalysed reaction is (2R)-2,3-dihydroxy-3-methylbutanoate + NADP(+) = (2S)-2-acetolactate + NADPH + H(+). The enzyme catalyses (2R,3R)-2,3-dihydroxy-3-methylpentanoate + NADP(+) = (S)-2-ethyl-2-hydroxy-3-oxobutanoate + NADPH + H(+). The protein operates within amino-acid biosynthesis; L-isoleucine biosynthesis; L-isoleucine from 2-oxobutanoate: step 2/4. It participates in amino-acid biosynthesis; L-valine biosynthesis; L-valine from pyruvate: step 2/4. Its function is as follows. Involved in the biosynthesis of branched-chain amino acids (BCAA). Catalyzes an alkyl-migration followed by a ketol-acid reduction of (S)-2-acetolactate (S2AL) to yield (R)-2,3-dihydroxy-isovalerate. In the isomerase reaction, S2AL is rearranged via a Mg-dependent methyl migration to produce 3-hydroxy-3-methyl-2-ketobutyrate (HMKB). In the reductase reaction, this 2-ketoacid undergoes a metal-dependent reduction by NADPH to yield (R)-2,3-dihydroxy-isovalerate. This Photobacterium profundum (strain SS9) protein is Ketol-acid reductoisomerase (NADP(+)).